We begin with the raw amino-acid sequence, 538 residues long: Fructooligosaccharide ABC transporter substrate-binding protein FusA (538 aa).

The first 22 residues, 1 to 22 (MKFKTFSKSAVLLTASLAVLAA), serve as a signal peptide directing secretion. Cysteine 23 carries the N-palmitoyl cysteine lipid modification. Cysteine 23 carries S-diacylglycerol cysteine lipidation. Glutamate 167 is a substrate binding site. The Ca(2+) site is built by aspartate 215, asparagine 217, asparagine 219, glutamate 221, aspartate 223, and glutamate 224. Residue asparagine 235 coordinates substrate. Ca(2+)-binding residues include aspartate 263, phenylalanine 264, aspartate 267, and asparagine 268. Substrate contacts are provided by tryptophan 314, asparagine 318, lysine 353, tryptophan 384, arginine 419, and glutamate 423.

This sequence belongs to the bacterial solute-binding protein 1 family. The complex is composed of two ATP-binding proteins (MsmK), two transmembrane proteins (FusB and FusC) and a solute-binding protein (FusA).

Its subcellular location is the cell membrane. In terms of biological role, part of the ABC transporter complex FusABC-MsmK involved in short- and long-chain fructooligosaccharide (FOS) import. Required for the utilization of long-chain FOSs. Binds kestose, nystose, fructofuranosyl-nystose and inulin, but not sucrose. Has a preference for long-chain FOSs (tetrasaccharides and larger). In Streptococcus pneumoniae serotype 4 (strain ATCC BAA-334 / TIGR4), this protein is Fructooligosaccharide ABC transporter substrate-binding protein FusA.